Consider the following 238-residue polypeptide: 1-(5-phosphoribosyl)-5-[(5-phosphoribosylamino)methylideneamino] imidazole-4-carboxamide isomerase (238 aa).

Asp-7 (proton acceptor) is an active-site residue. Asp-129 acts as the Proton donor in catalysis.

This sequence belongs to the HisA/HisF family.

It localises to the cytoplasm. It carries out the reaction 1-(5-phospho-beta-D-ribosyl)-5-[(5-phospho-beta-D-ribosylamino)methylideneamino]imidazole-4-carboxamide = 5-[(5-phospho-1-deoxy-D-ribulos-1-ylimino)methylamino]-1-(5-phospho-beta-D-ribosyl)imidazole-4-carboxamide. Its pathway is amino-acid biosynthesis; L-histidine biosynthesis; L-histidine from 5-phospho-alpha-D-ribose 1-diphosphate: step 4/9. This chain is 1-(5-phosphoribosyl)-5-[(5-phosphoribosylamino)methylideneamino] imidazole-4-carboxamide isomerase, found in Leuconostoc mesenteroides subsp. mesenteroides (strain ATCC 8293 / DSM 20343 / BCRC 11652 / CCM 1803 / JCM 6124 / NCDO 523 / NBRC 100496 / NCIMB 8023 / NCTC 12954 / NRRL B-1118 / 37Y).